The primary structure comprises 307 residues: Acetaldehyde dehydrogenase (307 aa).

Residue Cys131 is the Acyl-thioester intermediate of the active site. NAD(+)-binding positions include 162–170 and Asn273; that span reads SIGPGTRKN.

It belongs to the acetaldehyde dehydrogenase family.

It catalyses the reaction acetaldehyde + NAD(+) + CoA = acetyl-CoA + NADH + H(+). This is Acetaldehyde dehydrogenase (nahO) from Stutzerimonas stutzeri (Pseudomonas stutzeri).